Here is a 681-residue protein sequence, read N- to C-terminus: Peroxisomal acyl-coenzyme A oxidase 2 (681 aa).

Phosphoserine is present on residues Ser3 and Ser9. An N6-succinyllysine mark is found at Lys66, Lys137, Lys303, Lys453, Lys561, and Lys667. Positions 679-681 (HKM) match the Microbody targeting signal motif.

Belongs to the acyl-CoA oxidase family. In terms of assembly, homodimer. FAD serves as cofactor. As to expression, most abundant in liver. Also expressed in kidney. Not present in any other tissues tested.

It localises to the peroxisome. It carries out the reaction (25R)-3alpha,7alpha,12alpha-trihydroxy-5beta-cholestan-26-oyl-CoA + A + H2O = (24R,25R)-3alpha,7alpha,12alpha,24-tetrahydroxy-5beta-cholestan-26-oyl-CoA + AH2. The enzyme catalyses (25S)-3alpha,7alpha,12alpha-trihydroxy-5beta-cholestan-26-oyl-CoA + O2 = (24E)-3alpha,7alpha,12alpha-trihydroxy-5beta-cholest-24-en-26-oyl-CoA + H2O2. Functionally, oxidizes the CoA esters of the bile acid intermediates di- and tri-hydroxycoprostanic acids. Capable of oxidizing short as well as long chain 2-methyl branched fatty acids. The protein is Peroxisomal acyl-coenzyme A oxidase 2 of Rattus norvegicus (Rat).